Reading from the N-terminus, the 127-residue chain is Holo-[acyl-carrier-protein] synthase (127 aa).

Residues D9 and E58 each contribute to the Mg(2+) site.

The protein belongs to the P-Pant transferase superfamily. AcpS family. Mg(2+) serves as cofactor.

Its subcellular location is the cytoplasm. It catalyses the reaction apo-[ACP] + CoA = holo-[ACP] + adenosine 3',5'-bisphosphate + H(+). Transfers the 4'-phosphopantetheine moiety from coenzyme A to a Ser of acyl-carrier-protein. This Shewanella putrefaciens (strain CN-32 / ATCC BAA-453) protein is Holo-[acyl-carrier-protein] synthase.